The primary structure comprises 712 residues: 1,4-alpha-glucan branching enzyme GlgB (712 aa).

Asp-397 (nucleophile) is an active-site residue. The Proton donor role is filled by Glu-450.

The protein belongs to the glycosyl hydrolase 13 family. GlgB subfamily. Monomer.

It catalyses the reaction Transfers a segment of a (1-&gt;4)-alpha-D-glucan chain to a primary hydroxy group in a similar glucan chain.. Its pathway is glycan biosynthesis; glycogen biosynthesis. Functionally, catalyzes the formation of the alpha-1,6-glucosidic linkages in glycogen by scission of a 1,4-alpha-linked oligosaccharide from growing alpha-1,4-glucan chains and the subsequent attachment of the oligosaccharide to the alpha-1,6 position. The chain is 1,4-alpha-glucan branching enzyme GlgB from Bradyrhizobium sp. (strain ORS 278).